We begin with the raw amino-acid sequence, 1106 residues long: MSSVSSAEPTAQQNFNPSCHFRMRPNAANRGGSISSGNNRSSGFGGGGFDDGGDEISSSAIAAAAAAVLSSPVVSEFSYTRERLLELAPTGSIMPDALRDQLFFNEKNLPLVSNTPLSEHEQKLQHNINSSKAMSLLSHADRASIAAGAAYGSGYGAASGALQNGQSPTSRWAPKSSWNKGTPDRGTGTTPRGGGSVGRASGAFFAGRGGGRIGGENGFGGATNGGSPAAQNEDSPGTYQSKFNALRRGGGAGSVGRGGSTTGSAFNTRADALYNPNDPTDRPKAVNPAATRSESDEEEEEGWSKVGSTSRTSTNAAPQSSERPAWARSESWIQRTQQQQQQQQQQSTQQQAQPPITLWNNREVGSDSTVWKDRNHMVAAVRKASTENHPPQQQQQQQQRSSAPVSAPSRQESESTDVPNLPIPTYPSDPSAWSNNSMGGGIFYQPTPQPPAPIVKEEPVQFYYMDPTETRRGPFPKDQMNVWFKAGYFTDESLRVQRGENGEYKTIGDLKKLHGSSTPFEYLEDIEPPRPILPSIPYPSATNPLYPAAFGGVNMWSSMGQPTDVYMMQTNFEQQLVAERNRLLDDHNRRLAEEAEKMAKFQEAMYRQLTMQHEQRVREQELLLQKRAEEIEKREAESKREEAARLQKLEQEAREIEERKAALEAEDRRKREIEEYNRMCEKKKNEIIAKEAADRMRLEEATERERRRLEAESRVAEEKIRRDRVRAELEAREREEERKRAAERERIARETASLQQQAELDAAWAGKKIATVTTSNSAFTGAPKQVSPSGSEESDEWISTSKEVKHTKTAPWAAKVEAPQKSEKTLLEIQKEEERKFKVEQEKNAKLKAKEQASNITSAAAIAGDKSGGLWGASKTWAAPESNSSKSYVSPFLDGPSLEAANKMALQKKNSQPKIAVPAKSAPTSAKVATPVKAKATAVAVSSPATNQKTKKTKEQVATDELQQWFVKRFQQFSTQVDSSTLFDCIMSLENPNEVEDIVMSYLDESKTVKEFVREFIKRRIAMRAAGGRPDADDLTSARTAAAAPSDSNSGSNSNSGNGQGKKKKKTQKQVLDGNILGFRGTAAADRLNKGEIDAVPSAPVNPSRR.

The span at 1-17 (MSSVSSAEPTAQQNFNP) shows a compositional bias: polar residues. Disordered stretches follow at residues 1-50 (MSSV…GGFD), 160-370 (GALQ…DSTV), and 383-434 (KAST…SAWS). Positions 30–42 (RGGSISSGNNRSS) are enriched in low complexity. Polar residues predominate over residues 162 to 180 (LQNGQSPTSRWAPKSSWNK). Positions 207–224 (GRGGGRIGGENGFGGATN) are enriched in gly residues. Positions 229–243 (AAQNEDSPGTYQSKF) are enriched in polar residues. Gly residues predominate over residues 248 to 261 (RGGGAGSVGRGGST). Polar residues predominate over residues 306–322 (VGSTSRTSTNAAPQSSE). 2 stretches are compositionally biased toward low complexity: residues 334-353 (QRTQ…QQAQ) and 390-410 (PPQQ…APSR). In terms of domain architecture, GYF spans 459 to 508 (PVQFYYMDPTETRRGPFPKDQMNVWFKAGYFTDESLRVQRGENGEYKTIG). A coiled-coil region spans residues 584 to 746 (LDDHNRRLAE…ERKRAAERER (163 aa)). Disordered stretches follow at residues 778–811 (AFTG…KTAP), 909–928 (KNSQ…SAKV), 1026–1076 (AGGR…DGNI), and 1087–1106 (RLNK…PSRR). A compositionally biased stretch (polar residues) spans 786–801 (VSPSGSEESDEWISTS). Low complexity predominate over residues 1046-1057 (SDSNSGSNSNSG).

This chain is GYF domain-containing protein gyf-1, found in Caenorhabditis elegans.